A 119-amino-acid polypeptide reads, in one-letter code: Large ribosomal subunit protein bL20 (119 aa).

The protein belongs to the bacterial ribosomal protein bL20 family.

Its function is as follows. Binds directly to 23S ribosomal RNA and is necessary for the in vitro assembly process of the 50S ribosomal subunit. It is not involved in the protein synthesizing functions of that subunit. The chain is Large ribosomal subunit protein bL20 from Streptococcus equi subsp. equi (strain 4047).